Consider the following 928-residue polypeptide: BCAS3 microtubule associated cell migration factor (928 aa).

Met1 is modified (N-acetylmethionine). Lys215 participates in a covalent cross-link: Glycyl lysine isopeptide (Lys-Gly) (interchain with G-Cter in SUMO1); alternate. A Glycyl lysine isopeptide (Lys-Gly) (interchain with G-Cter in SUMO2); alternate cross-link involves residue Lys215. 2 required for recruitment to preautophagosomal structure in response to mitophagy regions span residues 254–312 (RGGA…SRRS) and 437–560 (YGGQ…IKAP). Residues Ser461, Ser480, and Ser488 each carry the phosphoserine modification. 2 disordered regions span residues 472–518 (TSKQ…PRLS) and 795–816 (VRSD…RGVS). Low complexity-rich tracts occupy residues 480 to 494 (SPVP…GSPL) and 505 to 514 (NNFTNNNPGN). Phosphoserine occurs at positions 838, 886, and 898. Residues 868 to 928 (ESPSRDVVGS…PLSLFPTGFP (61 aa)) are disordered. The segment covering 887–901 (IETLSNSSGSTSGSI) has biased composition (low complexity).

The protein belongs to the BCAS3 family. As to quaternary structure, interacts with histone H3, ESR1, KAT2B and PELP1; the interactions occur in a estrogen-dependent manner. Interacts with beta-tubulin and VIM. Interacts (via C-terminal) with PHAF1; the interaction is requrired for the association with the phagophore. In terms of tissue distribution, expressed in blood islands and yolk sac blood islands (at protein level). Highly expressed in mammary tumors. Expressed in eostrogen-induced epithelial cells of mammary glands. Expressed in brain, heart, kidney, lung, liver and spleen. Expressed in embryonic stem cells, embryoid bodies, endothelial cells and fibroblasts.

It is found in the nucleus. Its subcellular location is the cytoplasm. The protein localises to the cytoskeleton. It localises to the preautophagosomal structure. Its function is as follows. Functions synergistically with PELP1 as a transcriptional coactivator of estrogen receptor-responsive genes. Stimulates histone acetyltransferase activity. Binds to chromatin. Plays a role in angiogenesis. Participates in the regulation of cell polarity and directional endothelial cell migration by mediating both the activation and recruitment of CDC42 and the reorganization of the actin cytoskeleton at the cell leading edge. Promotes filipodia formation. Plays a regulatory role in autophagic activity. In complex with PHAF1, associates with the preautophagosomal structure during both non-selective and selective autophagy. Probably binds phosphatidylinositol 3-phosphate (PtdIns3P) which would mediate the recruitment preautophagosomal structures. In Mus musculus (Mouse), this protein is BCAS3 microtubule associated cell migration factor.